The sequence spans 237 residues: Small ribosomal subunit protein uS17m (237 aa).

It belongs to the universal ribosomal protein uS17 family. In terms of assembly, component of the mitochondrial small ribosomal subunit (mt-SSU). Mature yeast 74S mitochondrial ribosomes consist of a small (37S) and a large (54S) subunit. The 37S small subunit contains a 15S ribosomal RNA (15S mt-rRNA) and 34 different proteins. The 54S large subunit contains a 21S rRNA (21S mt-rRNA) and 46 different proteins.

The protein resides in the mitochondrion. Its function is as follows. Component of the mitochondrial ribosome (mitoribosome), a dedicated translation machinery responsible for the synthesis of mitochondrial genome-encoded proteins, including at least some of the essential transmembrane subunits of the mitochondrial respiratory chain. The mitoribosomes are attached to the mitochondrial inner membrane and translation products are cotranslationally integrated into the membrane. uS17m may have a meiosis-specific role as it accumulates during the middle stage of sporulation. The sequence is that of Small ribosomal subunit protein uS17m (MRPS17) from Saccharomyces cerevisiae (strain ATCC 204508 / S288c) (Baker's yeast).